Consider the following 176-residue polypeptide: ATP-dependent protease subunit HslV (176 aa).

Threonine 2 is a catalytic residue. Na(+) contacts are provided by alanine 157, cysteine 160, and threonine 163.

Belongs to the peptidase T1B family. HslV subfamily. As to quaternary structure, a double ring-shaped homohexamer of HslV is capped on each side by a ring-shaped HslU homohexamer. The assembly of the HslU/HslV complex is dependent on binding of ATP.

The protein resides in the cytoplasm. It catalyses the reaction ATP-dependent cleavage of peptide bonds with broad specificity.. Its activity is regulated as follows. Allosterically activated by HslU binding. Functionally, protease subunit of a proteasome-like degradation complex believed to be a general protein degrading machinery. The protein is ATP-dependent protease subunit HslV of Buchnera aphidicola subsp. Schizaphis graminum (strain Sg).